A 155-amino-acid polypeptide reads, in one-letter code: UPF0251 protein Paes_1249 (155 aa).

This sequence belongs to the UPF0251 family.

In Prosthecochloris aestuarii (strain DSM 271 / SK 413), this protein is UPF0251 protein Paes_1249.